We begin with the raw amino-acid sequence, 409 residues long: MLINVVLIILLVGLNGKASGQNQGLCSPDENASCADSSDTQDEFSFNILRKIKKALASYQPCSSDANDANCSCHAAVIKSDLAPYKATGVSRQMIESSARYGTRYKIYEKRLYREENCMFPARCQGIEHFLLPLVATLPDMDLVINTRDYPQINMAWGNGAQGPILSFSKTKDHRDIMYPAWTFWAGGPATKLHPRGIGRWDLMREKLEKRAAAIPWSQKRELGFFRGSRTSDERDSLILLSRRNPELVEAQYTKNQGWKSPKDTLDAPPAGEVSFEDHCKYKYLFNFRGVAASFRLKHLFLCQSLVFHVGDEWQEFFYDQLKPWVHYVPLKNYPSQQEYEELLTFFRKNDALAQEIAQRGRDFIWQHLRMKDIKCYWRRLLKSYVKLLTYEVQPEDQLIHIQPAKDEL.

Residues 1–20 (MLINVVLIILLVGLNGKASG) form the signal peptide. 4 disulfide bridges follow: Cys-62-Cys-73, Cys-71-Cys-376, Cys-118-Cys-124, and Cys-280-Cys-303. The active-site Proton donor/acceptor is Asp-149. The interaction with the consensus sequence C-X-S-X-[PA]-C in peptide substrates stretch occupies residues 190 to 195 (ATKLHP). Residues 227–231 (RGSRT), Arg-235, 274–276 (VSF), and 292–296 (AASFR) contribute to the UDP-alpha-D-glucose site. Positions 406-409 (KDEL) match the Prevents secretion from ER motif.

The protein belongs to the glycosyltransferase 90 family.

The protein resides in the endoplasmic reticulum lumen. The protein operates within protein modification; protein glycosylation. In terms of biological role, protein O-glucosyltransferase. Catalyzes the reaction that attaches glucose through an O-glycosidic linkage to a conserved serine residue found in the consensus sequence C-X-S-X-[PA]-C in epidermal growth factor-like repeats. Regulates Notch signaling by glucosylating Notch in the ER, glucosylation is required for the correct folding and cleavage of Notch. In Drosophila pseudoobscura pseudoobscura (Fruit fly), this protein is O-glucosyltransferase rumi.